The chain runs to 354 residues: C-C chemokine receptor type 5 (354 aa).

Residues Met-1–Ala-32 lie on the Extracellular side of the membrane. A glycan (O-linked (GalNAc...) serine) is linked at Ser-6. Tyr-10, Tyr-12, and Tyr-16 each carry sulfotyrosine. 2 disulfide bridges follow: Cys-22/Cys-271 and Cys-103/Cys-180. The helical transmembrane segment at Gln-33–Cys-60 threads the bilayer. The Cytoplasmic portion of the chain corresponds to Lys-61–Tyr-70. The helical transmembrane segment at Leu-71–Tyr-91 threads the bilayer. Residues Ala-92 to Lys-104 lie on the Extracellular side of the membrane. Residues Val-105–Ile-126 traverse the membrane as a helical segment. The Cytoplasmic portion of the chain corresponds to Asp-127–Thr-143. The chain crosses the membrane as a helical span at residues Val-144–Phe-168. Topologically, residues Thr-169–Met-200 are extracellular. A helical transmembrane segment spans residues Val-201 to Leu-220. The Cytoplasmic segment spans residues His-221–Arg-237. The chain crosses the membrane as a helical span at residues Leu-238–Phe-262. The Extracellular segment spans residues Gln-263–Gln-279. Residues Ala-280–Gly-303 form a helical membrane-spanning segment. Topologically, residues Glu-304 to Leu-354 are cytoplasmic. S-palmitoyl cysteine attachment occurs at residues Cys-323 and Cys-326. Phosphoserine; by BARK1 occurs at positions 338, 339, 344, and 351.

Belongs to the G-protein coupled receptor 1 family. In terms of assembly, interacts with PRAF2. Efficient ligand binding to CCL3/MIP-1alpha and CCL4/MIP-1beta requires sulfation, O-glycosylation and sialic acid modifications. Glycosylation on Ser-6 is required for efficient binding of CCL4. Interacts with GRK2. Interacts with ARRB1 and ARRB2. Interacts with CNIH4. Interacts with S100A4; this interaction stimulates T-lymphocyte chemotaxis. Post-translationally, sulfated on at least 2 of the N-terminal tyrosines. Sulfation is required for efficient binding of the chemokines, CCL3 and CCL4. O-glycosylated, but not N-glycosylated. Ser-6 appears to be the major site. Also sialylated glycans present which contribute to chemokine binding. In terms of processing, palmitoylation in the C-terminal is important for cell surface expression. Post-translationally, phosphorylation on serine residues in the C-terminal is stimulated by binding CC chemokines especially by APO-RANTES.

It localises to the cell membrane. Its function is as follows. Receptor for a number of inflammatory CC-chemokines including CCL3/MIP-1-alpha, CCL4/MIP-1-beta and RANTES and subsequently transduces a signal by increasing the intracellular calcium ion level. May play a role in the control of granulocytic lineage proliferation or differentiation. Participates in T-lymphocyte migration to the infection site by acting as a chemotactic receptor. The polypeptide is C-C chemokine receptor type 5 (Ccr5) (Mus musculus (Mouse)).